Consider the following 1905-residue polypeptide: MQSRLLLLGAPGGLGDVASRRVRLLLRQVLRGRPGGDQQRLEVRLLHSGATDSGETVSIGDVSYKLKTPKNPELVPQNYISDSPAQSIVQHLRWLMQKDLLGQDVFLIGPPGPLRRSVAMQYLELTKREVEYIALSRDTTETDLKQRREIRAGTAFYIDQCAVRAATEGRTLVLEGLEKAERNVLPVLNNLLENREMQLEDGRFLMSAERYDKLLQDHTKEELDAWKIVRVSENFRVIALGLPVPRYSGNPLDPPLRSRFQARDIYFLPFQDQLKLLYSVGANVSAEKISQLLSFATTLCSQESSTLGLPDFPLDSLPEAVQILDSFPMMSIEHALQWVYPYTLLLGHEGKMAVEGVLKRFELQGSGHSLLPKEIVRVERMTDSHGSYAHVTIRVAGKEVTIKVPAGTRAVNQPCAPDHFIQTVSHKQLLAEMVQSHMVKDICLIGGKGCGKTVIAKNFAALLGYSIEPIMLYQDMTARDLLQQRYTLPNGDTAWRSSPLVSAAREGKLVLLDGIHRVNAGTLAVLQRLIHDRELSLYDGSRLLREDRYLSLKEKLQLTDEQLQNRSIFPIHPSFRIIALAEPPIVGSTTQQWLGPEFLTMFFFHHMKPLVKSEEIQVIKETVPNVPQEALEKLLSVTHKLRETQDPTAQSLAASLSTRQLLRISRRLSKYPSENLHDAITKACLSRFLPSLAQSALEKNLADAAIETNTEDSLEPELENYKCEVVAGSLKIGAVSVPVHNAHEKMKVPDVLFYDNVQHMVVMEDMLKDFVLGEHLLLVGNQGVGKNKIVDRFLHLLNRPREYIQLHRDTTVQSLTLQPTVKGGLIVYEDSPLVKAVKLGHILVVDEADKAPTNVTCILKTLVENGEMILADGRRIVADAANVDGRENLVAIHPDFRMLALANRPGFPFLGNDFFGTLGDIFSCHAIDNPKPHSELSMLKQYGPDVPEPVLQKLVAAFGELRNLADQGIINYPYSTREVVNIVKHLQKFPTEGLSSVVRNVFDFDSYNNDMREILMNTLHKYGIPIGAKPTNVQLAKEFPLPEKTFMGYWIVGQTGNGMQKVLCPAETNHVDIKGPVLVNMEKYPIEKHEARFLSFTEECTSWKFPLDEVNLICDIAVSHENGEQTLYVAACNPVSLYFMNMTGKNGFFVDFFDIFPRMASGSWRPFVTVAPLGSPLRGQVVLHEEQSNAVLLLDTTGSAIRRLVLPTEEFTSKKSSWWSKEEGETYRMCKEFSHKNWVVFYKQTGNSLTVLDVLEGLAHTISLPINLRTVFLVAEDKWLLVENETNQKYLLTKPAHIGSEDTGACQLYMLKEELPSTGFGVTQETEFCIPDKVSSDQLSSENLTSAVGQKIASPNRILSDENSHATIVVGFPDLMSPSEVYSWKRSSSLRQPSVTSMTMYTGKRTNATPRHNNCVTLTHTNQVVRILPPGEVPLKDLYPKDVTPPQTAGYIEVTDLQAKKLRYIPVPSAESLSPYTAWISAISDTDALLAEWDKSSVVTVDMGGRVRLWETGLERLQQSLMEWRNMIGQDSDKHVQITIERDSNEDVSDPKHGKEDPDNMPHVGGNTWAGGTGGRDTAGLGGKGGPYRLDAGHPVYQVSEVEKDAVPEDVKRAAREMAQKAFQQRLKEIQMSEYDAATYERFSSAVQRQVHALRIILDNLQAKGKERQWLRHQATGELDDAKIIDGLAGEKSIYKRRGDLEPQLGSPQQKPKRLRLVVDVSGSMYRFNGVDRRLERSMEAVCMVMEAFENYEEKFKYDIAGHSGDGYNIKLVPVNQIPKNNKQRLEILKTMHEHSQFCMSGDHTLEGTEHAIKDITTEEADEYFVIILSDANLSRYGINPARFAQILTSDPQVNAFAIFIGSLGDQAARLQRTLPAGRSFIAMDTKKIPQILQQIFTSTMLSSI.

Residues 1–45 (MQSRLLLLGAPGGLGDVASRRVRLLLRQVLRGRPGGDQQRLEVRL) constitute a mitochondrion transit peptide. Residues 1–260 (MQSRLLLLGA…PLDPPLRSRF (260 aa)) form an interaction with PEX7 region. An ATP-binding site is contributed by 446-453 (GGKGCGKT). Over residues 1541 to 1560 (ERDSNEDVSDPKHGKEDPDN) the composition is skewed to basic and acidic residues. Residues 1541-1583 (ERDSNEDVSDPKHGKEDPDNMPHVGGNTWAGGTGGRDTAGLGG) are disordered. Gly residues predominate over residues 1568–1583 (TWAGGTGGRDTAGLGG). One can recognise a VWFA domain in the interval 1714–1896 (RLRLVVDVSG…KKIPQILQQI (183 aa)).

Monomer. Interacts with PEX7. Interacts with PEX5 in a PEX7-dependent manner. Isoform 1 is predominantly expressed in liver, kidney, pancreas, heart, and skeletal muscle (at protein level).

It localises to the mitochondrion. Exhibits ATPase activity in vitro. The sequence is that of von Willebrand factor A domain-containing protein 8 (Vwa8) from Mus musculus (Mouse).